The following is a 281-amino-acid chain: Large ribosomal subunit protein uL2 (281 aa).

Residues 222–281 form a disordered region; sequence TVRGSAMNPNDHPHGGGEGRQPIGRKSPMTPWGKRALGVKTRATKKASNQFIIRRRKETK.

Belongs to the universal ribosomal protein uL2 family. As to quaternary structure, part of the 50S ribosomal subunit. Forms a bridge to the 30S subunit in the 70S ribosome.

In terms of biological role, one of the primary rRNA binding proteins. Required for association of the 30S and 50S subunits to form the 70S ribosome, for tRNA binding and peptide bond formation. It has been suggested to have peptidyltransferase activity; this is somewhat controversial. Makes several contacts with the 16S rRNA in the 70S ribosome. This chain is Large ribosomal subunit protein uL2, found in Metamycoplasma hominis (strain ATCC 23114 / DSM 25592 / NBRC 14850 / NCTC 10111 / PG21) (Mycoplasma hominis).